We begin with the raw amino-acid sequence, 70 residues long: DNA gyrase inhibitor YacG (70 aa).

Residues 1–15 (MPEDKKAAAKVEPLR) show a composition bias toward basic and acidic residues. Residues 1–22 (MPEDKKAAAKVEPLRKTRPCPE) form a disordered region. 4 residues coordinate Zn(2+): C20, C23, C35, and C39.

Belongs to the DNA gyrase inhibitor YacG family. As to quaternary structure, interacts with GyrB. Zn(2+) serves as cofactor.

Its function is as follows. Inhibits all the catalytic activities of DNA gyrase by preventing its interaction with DNA. Acts by binding directly to the C-terminal domain of GyrB, which probably disrupts DNA binding by the gyrase. This is DNA gyrase inhibitor YacG from Rhizobium johnstonii (strain DSM 114642 / LMG 32736 / 3841) (Rhizobium leguminosarum bv. viciae).